A 643-amino-acid chain; its full sequence is Conglutin alpha 2 (643 aa).

The first 22 residues, Met-1–Ala-22, serve as a signal peptide directing secretion. Intrachain disulfides connect Cys-31-Cys-64 and Cys-107-Cys-464. The 226-residue stretch at Leu-36–Asn-261 folds into the Cupin type-1 1 domain. Disordered regions lie at residues Thr-110–Gln-142, Pro-190–Gly-243, and Pro-285–Gly-458. Over residues Gln-207–Gln-218 the composition is skewed to low complexity. 2 stretches are compositionally biased toward basic and acidic residues: residues His-228 to Lys-237 and Pro-298 to Glu-313. A compositionally biased stretch (acidic residues) spans Glu-314–Glu-323. 2 stretches are compositionally biased toward basic and acidic residues: residues Pro-324 to Gln-333 and Gln-357 to Thr-369. Residues Arg-422–Gly-433 are compositionally biased toward basic residues. The Cupin type-1 2 domain occupies Glu-470–Ser-616. Polar residues predominate over residues Asn-623–Ser-632. Residues Asn-623 to Ala-643 are disordered. Over residues Ser-634 to Ala-643 the composition is skewed to basic and acidic residues.

This sequence belongs to the 11S seed storage protein (globulins) family. As to quaternary structure, hexamer; each subunit is composed of an acidic and a basic chain derived from a single precursor and linked by a disulfide bond. Component of globulins complexes which accumulate in seeds.

Sulfur-rich seed storage protein. This protein found in the seeds of many leguminous and non-leguminous plants is the source of sulfur-containing amino acids in seed meals. In Lupinus angustifolius (Narrow-leaved blue lupine), this protein is Conglutin alpha 2.